The sequence spans 330 residues: Intraflagellar transport protein 46 homolog (330 aa).

Disordered stretches follow at residues methionine 1–arginine 21 and serine 55–tyrosine 112. Positions glutamate 7–aspartate 16 are enriched in acidic residues. Over residues serine 68–serine 79 the composition is skewed to basic and acidic residues. Acidic residues predominate over residues aspartate 80–asparagine 101.

The protein belongs to the IFT46 family.

The protein resides in the cytoplasm. Its subcellular location is the cytoskeleton. It is found in the cilium basal body. The protein localises to the cell projection. It localises to the cilium. Its function is as follows. Forms part of a complex involved in intraflagellar transport (IFT), the bi-directional movement of particles required for the assembly, maintenance and functioning of primary cilia. The protein is Intraflagellar transport protein 46 homolog of Schistosoma japonicum (Blood fluke).